A 530-amino-acid chain; its full sequence is MDDLQSQNLSMDMTDSPPALANNRLENGMAQLITTEAWNINSTDLVKKALVTVPAPSILNPPAESQSGMALKVAATVLQPLCLGESPVVMPIHMQVEGSSAPELNPNGNATYVMTTQGPVQLPVVLEQHVFQHLNSPLVLPQEAPCSSSTIHNNLFQGAEDPEAQPQLLDLRIPSQPQEPTLPFEAVLQNLFPSQGTLGPPPCQPPPGYAPVPPQPFSSPLSPLVPPATLLVPYPVIVPLPVPVPIPIPIPMPQSSESKFSSSFPKPPSSFGLHPFKGTQTPLEKDELKPFDILQPKEYFQLSRHTVIKMGSENEALDLSMKSVPWLKAGEVSPPIFQEDAALDLSVAAHRKSEPPPETLYDSGASVDSSGHTVMEKLPSGMEISFAPATSHEAPAMMDSHISSSDAATEMLSQPNHPSGEVKAENNIEMVGESQAAKVIVSVEDAVPTIFCGKIKGLSGVSTKNFSFKREDSVLQGYDINSQGEESMGNAEPLRKPIKNRSIKLKKVNSQEIHMLPIKKQRLATFFPRK.

A compositionally biased stretch (polar residues) spans 1 to 13 (MDDLQSQNLSMDM). Residues 1-22 (MDDLQSQNLSMDMTDSPPALAN) form a disordered region.

The chain is Retinoic acid-induced protein 2 (RAI2) from Homo sapiens (Human).